The sequence spans 561 residues: DNA ligase B (561 aa).

Residue lysine 125 is the N6-AMP-lysine intermediate of the active site.

This sequence belongs to the NAD-dependent DNA ligase family. LigB subfamily.

The enzyme catalyses NAD(+) + (deoxyribonucleotide)n-3'-hydroxyl + 5'-phospho-(deoxyribonucleotide)m = (deoxyribonucleotide)n+m + AMP + beta-nicotinamide D-nucleotide.. Functionally, catalyzes the formation of phosphodiester linkages between 5'-phosphoryl and 3'-hydroxyl groups in double-stranded DNA using NAD as a coenzyme and as the energy source for the reaction. The sequence is that of DNA ligase B from Salmonella schwarzengrund (strain CVM19633).